The primary structure comprises 131 residues: Holo-[acyl-carrier-protein] synthase (131 aa).

Mg(2+)-binding residues include D8 and E59.

It belongs to the P-Pant transferase superfamily. AcpS family. Requires Mg(2+) as cofactor.

The protein resides in the cytoplasm. It carries out the reaction apo-[ACP] + CoA = holo-[ACP] + adenosine 3',5'-bisphosphate + H(+). In terms of biological role, transfers the 4'-phosphopantetheine moiety from coenzyme A to a Ser of acyl-carrier-protein. The sequence is that of Holo-[acyl-carrier-protein] synthase from Rickettsia rickettsii (strain Iowa).